Consider the following 438-residue polypeptide: Glutaryl-CoA dehydrogenase, mitochondrial (438 aa).

A mitochondrion-targeting transit peptide spans 1 to 44; sequence MALRGVYAQLLNRGPGLRVFRSWSSATAQTEKGEKTQSRSAKPS. Substrate is bound by residues 138-139 and Ser-186; that span reads RS. FAD is bound by residues 177–186, Ser-186, and 212–214; these read FGLTEPNHGS and WIT. Lys-240 carries the N6-acetyllysine modification. Substrate is bound at residue 287–294; that stretch reads FGCLNNAR. FAD is bound by residues Arg-319, Gln-330, and 387–391; that span reads DMLGG. Residue Glu-414 is the Proton acceptor of the active site. Residue Gly-415 coordinates substrate. FAD is bound by residues Thr-416, 416 to 418, and Phe-434; that span reads THD.

Belongs to the acyl-CoA dehydrogenase family. Homotetramer. FAD is required as a cofactor.

The protein localises to the mitochondrion matrix. The enzyme catalyses glutaryl-CoA + oxidized [electron-transfer flavoprotein] + 2 H(+) = (2E)-butenoyl-CoA + reduced [electron-transfer flavoprotein] + CO2. It participates in amino-acid metabolism; lysine degradation. Its pathway is amino-acid metabolism; tryptophan metabolism. Catalyzes the oxidative decarboxylation of glutaryl-CoA to crotonyl-CoA and CO(2) in the degradative pathway of L-lysine, L-hydroxylysine, and L-tryptophan metabolism. It uses electron transfer flavoprotein as its electron acceptor. The chain is Glutaryl-CoA dehydrogenase, mitochondrial (GCDH) from Bos taurus (Bovine).